We begin with the raw amino-acid sequence, 419 residues long: GTPase Obg (419 aa).

The region spanning 2–159 (SAFVDAVTVE…FLAKVELQVL (158 aa)) is the Obg domain. An OBG-type G domain is found at 160 to 325 (ADVGLLGYPN…LKYEIATTLK (166 aa)). Residues 166–173 (GYPNVGKS), 191–195 (FTTLS), 212–215 (DLPG), 279–282 (NKMD), and 306–308 (SAL) each bind GTP. Mg(2+) is bound by residues serine 173 and threonine 193. The OCT domain occupies 341–419 (LNAEDAVDFI…IFSYEFEYLE (79 aa)).

The protein belongs to the TRAFAC class OBG-HflX-like GTPase superfamily. OBG GTPase family. As to quaternary structure, monomer. The cofactor is Mg(2+).

It is found in the cytoplasm. In terms of biological role, an essential GTPase which binds GTP, GDP and possibly (p)ppGpp with moderate affinity, with high nucleotide exchange rates and a fairly low GTP hydrolysis rate. Plays a role in control of the cell cycle, stress response, ribosome biogenesis and in those bacteria that undergo differentiation, in morphogenesis control. The chain is GTPase Obg from Acholeplasma laidlawii (strain PG-8A).